Reading from the N-terminus, the 272-residue chain is Orotidine 5'-phosphate decarboxylase (272 aa).

The Proton donor role is filled by Lys92.

This sequence belongs to the OMP decarboxylase family. Type 2 subfamily.

It carries out the reaction orotidine 5'-phosphate + H(+) = UMP + CO2. It functions in the pathway pyrimidine metabolism; UMP biosynthesis via de novo pathway; UMP from orotate: step 2/2. This chain is Orotidine 5'-phosphate decarboxylase (pyrF), found in Deinococcus radiodurans (strain ATCC 13939 / DSM 20539 / JCM 16871 / CCUG 27074 / LMG 4051 / NBRC 15346 / NCIMB 9279 / VKM B-1422 / R1).